We begin with the raw amino-acid sequence, 692 residues long: A-type ATP synthase subunit I (692 aa).

The next 7 membrane-spanning stretches (helical) occupy residues 389–409, 422–442, 494–514, 531–551, 553–573, 602–622, and 624–644; these read GIML…LFIW, LGYI…ITGG, ILVF…FVGF, GVWI…FAGA, TMIA…ASMY, ARLL…NIMA, and LVGE…LLVG.

The protein belongs to the V-ATPase 116 kDa subunit family. In terms of assembly, the A-type ATPase is composed of subunits A(3), B(3), C, D, E(1 or 2), F, H(2), I and K(x).

The protein resides in the cell membrane. In terms of biological role, component of the A-type ATP synthase that produces ATP from ADP in the presence of a proton gradient across the membrane. The polypeptide is A-type ATP synthase subunit I (Methanocaldococcus jannaschii (strain ATCC 43067 / DSM 2661 / JAL-1 / JCM 10045 / NBRC 100440) (Methanococcus jannaschii)).